The following is a 338-amino-acid chain: MTIRIAINGFGRIGRSVLRALYESGRRAEITVVAINELASAEGMAHLLKYDSSHGRFSWDVRQECDQLYVGDDCIRLLHQAEIQALPWRELGVDIVLDCSGVYGSREDGEAHLAAGAKKVLFSHPGTADLDATVVFGVNHQQLEREHRIVSNASCTTNCIIPVIKLLDDAFGIENGTVTTIHSSMNDQPVIDAYHHDLRRTRAASQSIIPVDTKLSAGITRIFPQFVDRFEAISVRVPTINVTAIDLSVSVRKAVNVNEINALLQKSAHESFRGIVDYTELPLVSADFNHDPHSAIVDGTQTRVSGQHLIKTLVWCDNEWGFANRMLDTTRAMAACGF.

12–13 (RI) is an NAD(+) binding site. Substrate is bound by residues 154 to 156 (SCT), arginine 200, 213 to 214 (TK), and arginine 236. Cysteine 155 acts as the Nucleophile in catalysis. Position 318 (asparagine 318) interacts with NAD(+).

The protein belongs to the glyceraldehyde-3-phosphate dehydrogenase family. Epd subfamily. In terms of assembly, homotetramer.

It localises to the cytoplasm. The catalysed reaction is D-erythrose 4-phosphate + NAD(+) + H2O = 4-phospho-D-erythronate + NADH + 2 H(+). Its pathway is cofactor biosynthesis; pyridoxine 5'-phosphate biosynthesis; pyridoxine 5'-phosphate from D-erythrose 4-phosphate: step 1/5. Its function is as follows. Catalyzes the NAD-dependent conversion of D-erythrose 4-phosphate to 4-phosphoerythronate. The chain is D-erythrose-4-phosphate dehydrogenase from Pectobacterium carotovorum subsp. carotovorum (strain PC1).